Here is a 147-residue protein sequence, read N- to C-terminus: Transcription antitermination protein NusB (147 aa).

This sequence belongs to the NusB family.

Its function is as follows. Involved in transcription antitermination. Required for transcription of ribosomal RNA (rRNA) genes. Binds specifically to the boxA antiterminator sequence of the ribosomal RNA (rrn) operons. In Teredinibacter turnerae (strain ATCC 39867 / T7901), this protein is Transcription antitermination protein NusB.